The following is a 191-amino-acid chain: uncharacterized protein (191 aa).

This is an uncharacterized protein from Archaeoglobus fulgidus (strain ATCC 49558 / DSM 4304 / JCM 9628 / NBRC 100126 / VC-16).